Here is a 436-residue protein sequence, read N- to C-terminus: Xylose isomerase (436 aa).

Catalysis depends on residues His-100 and Asp-103. The Mg(2+) site is built by Glu-231, Glu-267, His-270, Asp-295, Asp-306, Asp-308, and Asp-338.

This sequence belongs to the xylose isomerase family. As to quaternary structure, homotetramer. Mg(2+) is required as a cofactor.

It is found in the cytoplasm. It catalyses the reaction alpha-D-xylose = alpha-D-xylulofuranose. The sequence is that of Xylose isomerase from Rhizobium etli (strain CIAT 652).